The following is a 118-amino-acid chain: Small integral membrane protein 17 (118 aa).

The interval 1–84 is disordered; that stretch reads MQSLRPEQTR…DDESEGSQGF (84 aa). Basic and acidic residues predominate over residues 13–42; sequence LEPERTKTLLPRESRAWEKPPHPACTKDWE. A helical transmembrane segment spans residues 96 to 116; sequence IVLVVCVLFLFLVLTGMPMMF.

The protein resides in the membrane. The sequence is that of Small integral membrane protein 17 (SMIM17) from Homo sapiens (Human).